We begin with the raw amino-acid sequence, 317 residues long: Melanocyte-stimulating hormone receptor (317 aa).

At 1-37 (MPVQGSQRRLLGSLNSTPTATPHLGLAANQTGARCLE) the chain is on the extracellular side. The N-linked (GlcNAc...) asparagine glycan is linked to Asn29. A helical transmembrane segment spans residues 38 to 63 (VSVPDGLFLSLGLVSLVENVLVVTAI). Residues 64–72 (AKNRNLHSP) lie on the Cytoplasmic side of the membrane. Residues 73 to 93 (MYCFICCLALSDLLVSGSNML) form a helical membrane-spanning segment. The Extracellular portion of the chain corresponds to 94–118 (ETAVTLLLEAGALAARAAVVQQLDN). A helical transmembrane segment spans residues 119–140 (VIDVITCSSMLSSLCFLGAIAV). At 141–163 (DRYISIFYALRYHSIVTLPRARR) the chain is on the cytoplasmic side. A helical membrane pass occupies residues 164–183 (AVAAIWVASVLCSTLFIAYY). The Extracellular portion of the chain corresponds to 184-191 (DHAAVLLC). The chain crosses the membrane as a helical span at residues 192–211 (LVVFFLAMLVLMAVLYVHML). Residues 212-240 (ARACQHAQGIARLHKRQRLAHQGFGLKGA) are Cytoplasmic-facing. The chain crosses the membrane as a helical span at residues 241 to 266 (ATLTILLGIFFLCWGPFFLHLTLIVL). Residues 267-279 (CPQHPTCSCIFKN) are Extracellular-facing. The helical transmembrane segment at 280-300 (FNLFLALIICNAIIDPLIYAF) threads the bilayer. Residues 301-317 (RSQELRRTLKEVLLCSW) are Cytoplasmic-facing. Residue Cys315 is the site of S-palmitoyl cysteine attachment.

The protein belongs to the G-protein coupled receptor 1 family. As to quaternary structure, interacts with MGRN1, but does not undergo MGRN1-mediated ubiquitination; this interaction competes with GNAS-binding and thus inhibits agonist-induced cAMP production. Interacts with OPN3; the interaction results in a decrease in MC1R-mediated cAMP signaling and ultimately a decrease in melanin production in melanocytes.

The protein resides in the cell membrane. Receptor for MSH (alpha, beta and gamma) and ACTH. The activity of this receptor is mediated by G proteins which activate adenylate cyclase. Mediates melanogenesis, the production of eumelanin (black/brown) and phaeomelanin (red/yellow), via regulation of cAMP signaling in melanocytes. The polypeptide is Melanocyte-stimulating hormone receptor (MC1R) (Macaca sylvanus (Barbary macaque)).